The chain runs to 90 residues: MALVRSLLGAKKILSRSTAAVSAAPKGFLAVYVGESQKKRYLVPLSYLNQPSFQALLSKSEDEFGFDHPMGGLTIPCHEDTFINVTSRLQ.

It belongs to the ARG7 family.

It localises to the cell membrane. Its function is as follows. Functions as a positive effector of cell expansion through modulation of auxin transport. The protein is Auxin-responsive protein SAUR22 of Arabidopsis thaliana (Mouse-ear cress).